A 254-amino-acid polypeptide reads, in one-letter code: Thiazole synthase (254 aa).

Lys95 (schiff-base intermediate with DXP) is an active-site residue. Residues Gly156, 182–183 (AG), and 204–205 (NT) each bind 1-deoxy-D-xylulose 5-phosphate.

It belongs to the ThiG family. In terms of assembly, homotetramer. Forms heterodimers with either ThiH or ThiS.

It localises to the cytoplasm. It carries out the reaction [ThiS sulfur-carrier protein]-C-terminal-Gly-aminoethanethioate + 2-iminoacetate + 1-deoxy-D-xylulose 5-phosphate = [ThiS sulfur-carrier protein]-C-terminal Gly-Gly + 2-[(2R,5Z)-2-carboxy-4-methylthiazol-5(2H)-ylidene]ethyl phosphate + 2 H2O + H(+). Its pathway is cofactor biosynthesis; thiamine diphosphate biosynthesis. Its function is as follows. Catalyzes the rearrangement of 1-deoxy-D-xylulose 5-phosphate (DXP) to produce the thiazole phosphate moiety of thiamine. Sulfur is provided by the thiocarboxylate moiety of the carrier protein ThiS. In vitro, sulfur can be provided by H(2)S. The sequence is that of Thiazole synthase from Shewanella sp. (strain MR-7).